The following is a 1377-amino-acid chain: DNA-directed RNA polymerase subunit beta' (1377 aa).

Zn(2+) contacts are provided by cysteine 60, cysteine 62, cysteine 75, and cysteine 78. Mg(2+) contacts are provided by aspartate 449, aspartate 451, and aspartate 453. Residues cysteine 777, cysteine 851, cysteine 858, and cysteine 861 each coordinate Zn(2+).

It belongs to the RNA polymerase beta' chain family. The RNAP catalytic core consists of 2 alpha, 1 beta, 1 beta' and 1 omega subunit. When a sigma factor is associated with the core the holoenzyme is formed, which can initiate transcription. Mg(2+) serves as cofactor. Requires Zn(2+) as cofactor.

The enzyme catalyses RNA(n) + a ribonucleoside 5'-triphosphate = RNA(n+1) + diphosphate. Its function is as follows. DNA-dependent RNA polymerase catalyzes the transcription of DNA into RNA using the four ribonucleoside triphosphates as substrates. The polypeptide is DNA-directed RNA polymerase subunit beta' (Borreliella burgdorferi (strain ATCC 35210 / DSM 4680 / CIP 102532 / B31) (Borrelia burgdorferi)).